The following is a 157-amino-acid chain: SsrA-binding protein (157 aa).

Belongs to the SmpB family.

It is found in the cytoplasm. Required for rescue of stalled ribosomes mediated by trans-translation. Binds to transfer-messenger RNA (tmRNA), required for stable association of tmRNA with ribosomes. tmRNA and SmpB together mimic tRNA shape, replacing the anticodon stem-loop with SmpB. tmRNA is encoded by the ssrA gene; the 2 termini fold to resemble tRNA(Ala) and it encodes a 'tag peptide', a short internal open reading frame. During trans-translation Ala-aminoacylated tmRNA acts like a tRNA, entering the A-site of stalled ribosomes, displacing the stalled mRNA. The ribosome then switches to translate the ORF on the tmRNA; the nascent peptide is terminated with the 'tag peptide' encoded by the tmRNA and targeted for degradation. The ribosome is freed to recommence translation, which seems to be the essential function of trans-translation. The sequence is that of SsrA-binding protein from Clostridium novyi (strain NT).